A 334-amino-acid chain; its full sequence is Testis-specific Y-encoded protein 1 (334 aa).

Ser4 carries the phosphoserine modification. 2 disordered regions span residues 27–46 and 96–146; these read LEGEPSVQAPEQSPGAPAGD and NEGE…AERR. Basic and acidic residues-rich tracts occupy residues 96 to 108 and 115 to 128; these read NEGEEVKDQKQEG and ELEKNPEQACDSKD.

The protein belongs to the nucleosome assembly protein (NAP) family. Phosphorylated. Testis.

It localises to the cytoplasm. The protein localises to the nucleus. In terms of biological role, may be involved in sperm differentiation and proliferation. In Rattus norvegicus (Rat), this protein is Testis-specific Y-encoded protein 1 (Tspy1).